The sequence spans 290 residues: Phosphatidylserine decarboxylase proenzyme (290 aa).

Active-site charge relay system; for autoendoproteolytic cleavage activity residues include Asp96, His153, and Ser257. The active-site Schiff-base intermediate with substrate; via pyruvic acid; for decarboxylase activity is Ser257. The residue at position 257 (Ser257) is a Pyruvic acid (Ser); by autocatalysis.

Belongs to the phosphatidylserine decarboxylase family. PSD-B subfamily. Prokaryotic type I sub-subfamily. As to quaternary structure, heterodimer of a large membrane-associated beta subunit and a small pyruvoyl-containing alpha subunit. Requires pyruvate as cofactor. Is synthesized initially as an inactive proenzyme. Formation of the active enzyme involves a self-maturation process in which the active site pyruvoyl group is generated from an internal serine residue via an autocatalytic post-translational modification. Two non-identical subunits are generated from the proenzyme in this reaction, and the pyruvate is formed at the N-terminus of the alpha chain, which is derived from the carboxyl end of the proenzyme. The autoendoproteolytic cleavage occurs by a canonical serine protease mechanism, in which the side chain hydroxyl group of the serine supplies its oxygen atom to form the C-terminus of the beta chain, while the remainder of the serine residue undergoes an oxidative deamination to produce ammonia and the pyruvoyl prosthetic group on the alpha chain. During this reaction, the Ser that is part of the protease active site of the proenzyme becomes the pyruvoyl prosthetic group, which constitutes an essential element of the active site of the mature decarboxylase.

It is found in the cell membrane. It carries out the reaction a 1,2-diacyl-sn-glycero-3-phospho-L-serine + H(+) = a 1,2-diacyl-sn-glycero-3-phosphoethanolamine + CO2. The protein operates within phospholipid metabolism; phosphatidylethanolamine biosynthesis; phosphatidylethanolamine from CDP-diacylglycerol: step 2/2. In terms of biological role, catalyzes the formation of phosphatidylethanolamine (PtdEtn) from phosphatidylserine (PtdSer). The chain is Phosphatidylserine decarboxylase proenzyme from Haemophilus influenzae (strain ATCC 51907 / DSM 11121 / KW20 / Rd).